The primary structure comprises 109 residues: Mitochondrial import inner membrane translocase subunit TIM12 (109 aa).

At Ser2 the chain carries N-acetylserine. The Twin CX3C motif motif lies at 40 to 66; it reads CLEKCIPHEGFGEPDLTKGEQCCIDRC. 2 disulfide bridges follow: Cys40–Cys66 and Cys44–Cys62.

Belongs to the small Tim family. As to quaternary structure, component of the TIM22 complex, whose core is composed of TIM18, TIM22 and TIM54, associated with the peripheral proteins MRS5/TIM12 and the 70 kDa heterohexamer composed of TIM9 and TIM10 (or TIM8 and TIM13). Interacts directly with both the TIM22 protein and the TIM9-TIM10 heterohexamer. Interacts with multi-pass transmembrane proteins in transit.

It localises to the mitochondrion inner membrane. It is found in the mitochondrion intermembrane space. Its function is as follows. Essential component of the TIM22 complex, a complex that mediates the import and insertion of multi-pass transmembrane proteins into the mitochondrial inner membrane. The TIM22 complex forms a twin-pore translocase that uses the membrane potential as external driving force. In the TIM22 complex, it acts as a docking point for the soluble TIM9-TIM10 heterohexamer that guides the target proteins in transit through the aqueous mitochondrial intermembrane space. In Saccharomyces cerevisiae (strain ATCC 204508 / S288c) (Baker's yeast), this protein is Mitochondrial import inner membrane translocase subunit TIM12 (TIM12).